Here is a 297-residue protein sequence, read N- to C-terminus: MIDSEAHEKRPPILTSSKQDISPHITNVGEMKHYLCGCCAAFNNVAITYPIQKVLFRQQLYGIKTRDAVLQLRRDGFRNLYRGILPPLMQKTTTLALMFGLYEDLSCLLRKHVRAPEFATHGVAAVLAGTAEAIFTPLERVQTLLQNHKHHDKFTNTYQAFKALKCHGIGEYYRGLVPILFRNGLSNVLFFGLRGPIKEHLPTATTHSAHLVNDFIGGGLLGAMLGFLCFPINVVKTRLQSQIGGEFQSFPKVFQKIWLERDRKLINLFRGAHLNYHRSLISWGIINATYEFLLKFI.

3 Solcar repeats span residues 28-108 (VGEM…LSCL), 116-200 (PEFA…IKEH), and 209-296 (AHLV…LLKF). The next 6 helical transmembrane spans lie at 34-51 (YLCG…TYPI), 85-105 (LPPL…YEDL), 118-138 (FATH…FTPL), 179-199 (ILFR…PIKE), 215-235 (FIGG…INVV), and 268-289 (LFRG…INAT).

It belongs to the mitochondrial carrier (TC 2.A.29) family.

Its subcellular location is the mitochondrion inner membrane. It carries out the reaction NAD(+)(in) = NAD(+)(out). Mitochondrial membrane carrier protein that mediates the import of NAD(+) into mitochondria. Compared to SLC25A51, SLC25A52-mediated transport is not essential for the import of NAD(+) in mitochondria. The transport mechanism, uniport or antiport, its electrogenicity and substrate selectivity, remain to be elucidated. This Homo sapiens (Human) protein is Mitochondrial nicotinamide adenine dinucleotide transporter SLC25A52.